We begin with the raw amino-acid sequence, 159 residues long: Phosphopantetheine adenylyltransferase (159 aa).

Position 9 (threonine 9) interacts with substrate. Residues 9–10 and histidine 17 each bind ATP; that span reads TF. Substrate contacts are provided by lysine 41, leucine 73, and arginine 87. Residues 88–90, glutamate 98, and 123–129 each bind ATP; these read GLR and YSFISST.

This sequence belongs to the bacterial CoaD family. Homohexamer. Mg(2+) serves as cofactor.

Its subcellular location is the cytoplasm. It carries out the reaction (R)-4'-phosphopantetheine + ATP + H(+) = 3'-dephospho-CoA + diphosphate. It participates in cofactor biosynthesis; coenzyme A biosynthesis; CoA from (R)-pantothenate: step 4/5. Its function is as follows. Reversibly transfers an adenylyl group from ATP to 4'-phosphopantetheine, yielding dephospho-CoA (dPCoA) and pyrophosphate. The protein is Phosphopantetheine adenylyltransferase of Pseudomonas aeruginosa (strain LESB58).